The chain runs to 257 residues: Expansin-A10 (257 aa).

An N-terminal signal peptide occupies residues 1 to 18 (MAPCLLLVLFLLPALATG). The region spanning 50-163 (GGACGFGDLG…RRVNCLRDGG (114 aa)) is the Expansin-like EG45 domain. Positions 173 to 252 (FFLTVLISNV…EWDFGKTYTG (80 aa)) constitute an Expansin-like CBD domain.

The protein belongs to the expansin family. Expansin A subfamily. Expressed in panicles and flowers.

It is found in the secreted. The protein resides in the cell wall. Its subcellular location is the membrane. May cause loosening and extension of plant cell walls by disrupting non-covalent bonding between cellulose microfibrils and matrix glucans. No enzymatic activity has been found. May be required for rapid internodal elongation in deepwater rice during submergence. This Oryza sativa subsp. japonica (Rice) protein is Expansin-A10 (EXPA10).